A 153-amino-acid polypeptide reads, in one-letter code: Actin-related protein 2/3 complex subunit 5-like protein (153 aa).

S64 carries the phosphoserine modification.

It belongs to the ARPC5 family. As to quaternary structure, may be a component of the Arp2/3 complex in which it may replace ARPC5.

The protein resides in the cytoplasm. It is found in the cytoskeleton. May function as component of the Arp2/3 complex which is involved in regulation of actin polymerization and together with an activating nucleation-promoting factor (NPF) mediates the formation of branched actin networks. This Pongo abelii (Sumatran orangutan) protein is Actin-related protein 2/3 complex subunit 5-like protein (ARPC5L).